A 163-amino-acid polypeptide reads, in one-letter code: Ribosome maturation factor RimM (163 aa).

Residues 92-162 (EDEFYVADLV…AGRAVVRPPE (71 aa)) enclose the PRC barrel domain.

The protein belongs to the RimM family. In terms of assembly, binds ribosomal protein uS19.

It localises to the cytoplasm. An accessory protein needed during the final step in the assembly of 30S ribosomal subunit, possibly for assembly of the head region. Essential for efficient processing of 16S rRNA. May be needed both before and after RbfA during the maturation of 16S rRNA. It has affinity for free ribosomal 30S subunits but not for 70S ribosomes. The protein is Ribosome maturation factor RimM of Rubrobacter xylanophilus (strain DSM 9941 / JCM 11954 / NBRC 16129 / PRD-1).